A 337-amino-acid chain; its full sequence is Protein FAM76B (337 aa).

Residues E143–T241 are disordered. Low complexity predominate over residues S147–S159. Residues H166–I187 show a composition bias toward basic residues. Positions T213 to F222 are enriched in basic and acidic residues. A compositionally biased stretch (polar residues) spans N226–T241. Positions K301–K326 form a coiled coil.

The protein belongs to the FAM76 family.

Plays a role in hematopoiesis and immune system development, and participates in the inflammatory response. The chain is Protein FAM76B (fam76b) from Xenopus laevis (African clawed frog).